A 182-amino-acid chain; its full sequence is T-cell surface glycoprotein CD3 gamma chain (182 aa).

The N-terminal stretch at 1 to 22 (MEQGKHLAGLILAITLLQGTMA) is a signal peptide. Residues 23-98 (QLKEGKHSVL…GSKENSKRLQ (76 aa)) form the Ig-like domain. Topologically, residues 23 to 116 (QLKEGKHSVL…CIELNSATVS (94 aa)) are extracellular. A disulfide bridge connects residues Cys46 and Cys87. N-linked (GlcNAc...) asparagine glycosylation is present at Asn66. A helical transmembrane segment spans residues 117 to 137 (GFIFTEIISLFFLAVGVYFIA). At 138–182 (GQDGVRQSRASDKQTLLSNDQLYQPLKDREDDQYSHLQGNNSRKN) the chain is on the cytoplasmic side. Position 145 is a phosphoserine (Ser145). Position 148 is a phosphoserine; by PKC (Ser148). Residues 149 to 177 (DKQTLLSNDQLYQPLKDREDDQYSHLQGN) form the ITAM domain. The short motif at 153-154 (LL) is the Di-leucine motif element.

The TCR-CD3 complex is composed of a CD3D/CD3E and a CD3G/CD3E heterodimers that preferentially associate with TCRalpha and TCRbeta, respectively, to form TCRalpha/CD3E/CD3G and TCRbeta/CD3G/CD3E trimers. In turn, the hexamer interacts with CD3Z homodimer to form the TCR-CD3 complex. Alternatively, TCRalpha and TCRbeta can be replaced by TCRgamma and TCRdelta. In terms of processing, phosphorylated on Tyr residues after T-cell receptor triggering by LCK in association with CD4/CD8. Phosphorylated also by PKC; leading to the TCR complex down-regulation. Post-translationally, phosphorylated on Tyr residues after T-cell receptor triggering by LCK in association with CD4/CD8.

Its subcellular location is the cell membrane. In terms of biological role, part of the TCR-CD3 complex present on T-lymphocyte cell surface that plays an essential role in adaptive immune response. When antigen presenting cells (APCs) activate T-cell receptor (TCR), TCR-mediated signals are transmitted across the cell membrane by the CD3 chains CD3D, CD3E, CD3G and CD3Z. All CD3 chains contain immunoreceptor tyrosine-based activation motifs (ITAMs) in their cytoplasmic domain. Upon TCR engagement, these motifs become phosphorylated by Src family protein tyrosine kinases LCK and FYN, resulting in the activation of downstream signaling pathways. In addition to this role of signal transduction in T-cell activation, CD3G plays an essential role in the dynamic regulation of TCR expression at the cell surface. Indeed, constitutive TCR cycling is dependent on the di-leucine-based (diL) receptor-sorting motif present in CD3G. The chain is T-cell surface glycoprotein CD3 gamma chain (CD3G) from Sus scrofa (Pig).